A 64-amino-acid chain; its full sequence is Copper-specific metallothionein-2 (64 aa).

Cysteine 3, cysteine 5, cysteine 9, cysteine 11, cysteine 16, cysteine 18, cysteine 22, cysteine 24, cysteine 27, cysteine 33, cysteine 40, cysteine 44, cysteine 50, cysteine 52, cysteine 56, and cysteine 58 together coordinate Cu(+).

It belongs to the metallothionein superfamily. Type 2 family.

Functionally, the metallothioneins are involved in the cellular sequestration of toxic metal ions and regulation of essential trace elements. This isoform binds exclusively copper. The chain is Copper-specific metallothionein-2 from Callinectes sapidus (Blue crab).